Reading from the N-terminus, the 78-residue chain is Small ribosomal subunit protein bS18 (78 aa).

Belongs to the bacterial ribosomal protein bS18 family. In terms of assembly, part of the 30S ribosomal subunit. Forms a tight heterodimer with protein bS6.

In terms of biological role, binds as a heterodimer with protein bS6 to the central domain of the 16S rRNA, where it helps stabilize the platform of the 30S subunit. The chain is Small ribosomal subunit protein bS18 from Nocardioides sp. (strain ATCC BAA-499 / JS614).